We begin with the raw amino-acid sequence, 136 residues long: Histone H2A (136 aa).

Residues 1 to 11 are compositionally biased toward gly residues; that stretch reads MTGGGKSGGKA. A disordered region spans residues 1–24; that stretch reads MTGGGKSGGKASGSKNAQSRSSKA. 2 positions are modified to N6-acetyllysine: Lys-6 and Lys-10. At Gln-107 the chain carries N5-methylglutamine. Ser-133 is subject to Phosphoserine. The [ST]-Q motif motif lies at 133 to 134; sequence SQ.

Belongs to the histone H2A family. In terms of assembly, the nucleosome is a histone octamer containing two molecules each of H2A, H2B, H3 and H4 assembled in one H3-H4 heterotetramer and two H2A-H2B heterodimers. The octamer wraps approximately 147 bp of DNA. Post-translationally, phosphorylated to form H2AS128ph (gamma-H2A) in response to DNA double-strand breaks (DSBs) generated by exogenous genotoxic agents and by stalled replication forks. Phosphorylation is dependent on the DNA damage checkpoint kinases MEC1/ATR and TEL1/ATM, spreads on either side of a detected DSB site and may mark the surrounding chromatin for recruitment of proteins required for DNA damage signaling and repair. Gamma-H2A is removed from the DNA prior to the strand invasion-primer extension step of the repair process and subsequently dephosphorylated. Dephosphorylation is necessary for efficient recovery from the DNA damage checkpoint. Acetylated by ESA1 to form H2AK4ac and H2AK7ac.

Its subcellular location is the nucleus. The protein localises to the chromosome. In terms of biological role, core component of nucleosome which plays a central role in DNA double strand break (DSB) repair. Nucleosomes wrap and compact DNA into chromatin, limiting DNA accessibility to the cellular machineries which require DNA as a template. Histones thereby play a central role in transcription regulation, DNA repair, DNA replication and chromosomal stability. DNA accessibility is regulated via a complex set of post-translational modifications of histones, also called histone code, and nucleosome remodeling. This Pyricularia oryzae (strain Y34) (Rice blast fungus) protein is Histone H2A (HTA1).